A 547-amino-acid chain; its full sequence is Chaperonin GroEL (547 aa).

ATP contacts are provided by residues Thr-30–Pro-33, Lys-51, Asp-87–Thr-91, Gly-415, Asn-479–Ala-481, and Asp-495.

This sequence belongs to the chaperonin (HSP60) family. In terms of assembly, forms a cylinder of 14 subunits composed of two heptameric rings stacked back-to-back. Interacts with the co-chaperonin GroES.

The protein localises to the cytoplasm. The catalysed reaction is ATP + H2O + a folded polypeptide = ADP + phosphate + an unfolded polypeptide.. Together with its co-chaperonin GroES, plays an essential role in assisting protein folding. The GroEL-GroES system forms a nano-cage that allows encapsulation of the non-native substrate proteins and provides a physical environment optimized to promote and accelerate protein folding. The polypeptide is Chaperonin GroEL (Pseudomonas syringae pv. tomato (strain ATCC BAA-871 / DC3000)).